We begin with the raw amino-acid sequence, 638 residues long: Asparagine--tRNA ligase, cytoplasmic 2 (638 aa).

Over residues 1-16 (MESHGKTHQKEHDNDL) the composition is skewed to basic and acidic residues. Disordered stretches follow at residues 1 to 23 (MESH…PITL) and 62 to 87 (VKKN…DQAH).

This sequence belongs to the class-II aminoacyl-tRNA synthetase family.

It localises to the cytoplasm. It is found in the cytosol. It catalyses the reaction tRNA(Asn) + L-asparagine + ATP = L-asparaginyl-tRNA(Asn) + AMP + diphosphate + H(+). This chain is Asparagine--tRNA ligase, cytoplasmic 2, found in Arabidopsis thaliana (Mouse-ear cress).